Here is a 183-residue protein sequence, read N- to C-terminus: Protein Syd (183 aa).

Belongs to the Syd family.

The protein localises to the cell inner membrane. Functionally, interacts with the SecY protein in vivo. May bind preferentially to an uncomplexed state of SecY, thus functioning either as a chelating agent for excess SecY in the cell or as a regulatory factor that negatively controls the translocase function. The polypeptide is Protein Syd (Aliivibrio fischeri (strain ATCC 700601 / ES114) (Vibrio fischeri)).